The following is a 348-amino-acid chain: Isopentenyl-diphosphate delta-isomerase (348 aa).

Arg5–Lys6 serves as a coordination point for substrate. Residues Ser61, Ser62 to Thr64, Ser92, and Asn120 contribute to the FMN site. Position 92–94 (Ser92–Arg94) interacts with substrate. Residue Gln159 participates in substrate binding. Mg(2+) is bound at residue Glu160. FMN is bound by residues Lys189, Ser214, Thr219, Gly269 to Arg271, and Ala290 to Arg291.

This sequence belongs to the IPP isomerase type 2 family. As to quaternary structure, homooctamer. Dimer of tetramers. It depends on FMN as a cofactor. NADPH serves as cofactor. Requires Mg(2+) as cofactor.

It is found in the cytoplasm. The enzyme catalyses isopentenyl diphosphate = dimethylallyl diphosphate. Functionally, involved in the biosynthesis of isoprenoids. Catalyzes the 1,3-allylic rearrangement of the homoallylic substrate isopentenyl (IPP) to its allylic isomer, dimethylallyl diphosphate (DMAPP). The protein is Isopentenyl-diphosphate delta-isomerase of Thermoplasma acidophilum (strain ATCC 25905 / DSM 1728 / JCM 9062 / NBRC 15155 / AMRC-C165).